Consider the following 324-residue polypeptide: Hydroxylase/desaturase CTB9 (324 aa).

Over residues 1-11 (MTSTITTTETL) the composition is skewed to polar residues. Disordered regions lie at residues 1 to 33 (MTST…KELP) and 288 to 308 (TARR…EPRA).

This sequence belongs to the asaB hydroxylase/desaturase family.

It functions in the pathway mycotoxin biosynthesis. Its function is as follows. Hydroxylase/desaturase; part of the gene cluster that mediates the biosynthesis of cercosporin, a light-activated, non-host-selective toxin. The perylenequinone chromophore of cercosporin absorbs light energy to attain an electronically-activated triplet state and produces active oxygen species such as the hydroxyl radical, superoxide, hydrogen peroxide or singlet oxygen upon reaction with oxygen molecules. These reactive oxygen species cause damage to various cellular components including lipids, proteins and nucleic acids. The first step of cercosporin biosynthesis is performed by the polyketide synthase CTB1 which catalyzes the formation of nor-toralactone. The starter unit acyltransferase (SAT) domain of CTB1 initiates polyketide extension by the selective utilization of acetyl-CoA, which is elongated to the heptaketide in the beta-ketoacyl synthase (KS) domain by successive condensations with six malonyl units introduced by the malonyl acyltransferase (MAT) domain. The product template (PT) domain catalyzes C4-C9 and C2-C11 aldol cyclizations and dehydrations to a trihydroxynaphthalene, which is thought to be delivered to the thioesterase (TE) domain for product release. The bifunctional enzyme CTB3 then methylates nor-toralactone to toralactone before conducting an unusual oxidative aromatic ring opening. The O-methyltransferase CTB2 further methylates the nascent OH-6 of the CBT3 product, blocking further oxidation at this site before the reductase CTB6 reduces the 2-oxopropyl ketone at position C7, giving naphthalene. The FAD-dependent monooxygenase CTB5 in concert with the multicopper oxidase CTB12 are responsible for homodimerization of naphthalene with CTB7 installing the dioxepine moiety, finally producing cercosporin. The fasciclin domain-containing protein CTB11 might act with CTB5 and CTB12 whereas the roles of CTB9 and CTB10 have still to be elucidated. This is Hydroxylase/desaturase CTB9 from Cercospora beticola (Sugarbeet leaf spot fungus).